A 252-amino-acid chain; its full sequence is Chitooligosaccharide deacetylase (252 aa).

Mg(2+) contacts are provided by His61 and His125.

Belongs to the YdjC deacetylase family. ChbG subfamily. As to quaternary structure, homodimer. The cofactor is Mg(2+).

The protein resides in the cytoplasm. The catalysed reaction is N,N'-diacetylchitobiose + H2O = N-acetyl-beta-D-glucosaminyl-(1-&gt;4)-D-glucosamine + acetate. It carries out the reaction diacetylchitobiose-6'-phosphate + H2O = N'-monoacetylchitobiose-6'-phosphate + acetate. It participates in glycan degradation; chitin degradation. Functionally, involved in the degradation of chitin. ChbG is essential for growth on the acetylated chitooligosaccharides chitobiose and chitotriose but is dispensable for growth on cellobiose and chitosan dimer, the deacetylated form of chitobiose. Deacetylation of chitobiose-6-P and chitotriose-6-P is necessary for both the activation of the chb promoter by the regulatory protein ChbR and the hydrolysis of phosphorylated beta-glucosides by the phospho-beta-glucosidase ChbF. Catalyzes the removal of only one acetyl group from chitobiose-6-P to yield monoacetylchitobiose-6-P, the inducer of ChbR and the substrate of ChbF. The protein is Chitooligosaccharide deacetylase of Salmonella paratyphi B (strain ATCC BAA-1250 / SPB7).